The sequence spans 160 residues: Oligoribonuclease (160 aa).

Residues 8-158 (LIWIDLEMTG…YNKLKKKTLI (151 aa)) enclose the Exonuclease domain. The active site involves Tyr129.

The protein belongs to the oligoribonuclease family.

The protein resides in the cytoplasm. Its function is as follows. 3'-to-5' exoribonuclease specific for small oligoribonucleotides. The polypeptide is Oligoribonuclease (orn) (Buchnera aphidicola subsp. Baizongia pistaciae (strain Bp)).